Consider the following 468-residue polypeptide: Monogalactosyldiacylglycerol synthase 2, chloroplastic (468 aa).

Residues histidine 82, arginine 251, 361–365 (GTIAE), and glutamate 383 each bind UDP.

Belongs to the glycosyltransferase 28 family. In terms of tissue distribution, expressed mainly in floral buds. Detected in roots, leaves, stems, siliques and pollen tubes.

It is found in the plastid. Its subcellular location is the chloroplast outer membrane. It catalyses the reaction a 1,2-diacyl-sn-glycerol + UDP-alpha-D-galactose = a 1,2-diacyl-3-O-(beta-D-galactosyl)-sn-glycerol + UDP + H(+). The catalysed reaction is 1,2-di-(9Z,12Z-octadecadienoyl)-sn-glycerol + UDP-alpha-D-galactose = 1,2-di-(9Z,12Z-octadecadienoyl)-3-beta-D-galactosyl-sn-glycerol + UDP + H(+). It carries out the reaction 1-(9Z-octadecenoyl)-2-hexadecanoyl-sn-glycerol + UDP-alpha-D-galactose = 1-(9Z-octadecenoyl)-2-hexadecanoyl-3-beta-D-galactosyl-sn-glycerol + UDP + H(+). The enzyme catalyses 1,2-di-(9Z-octadecenoyl)-sn-glycerol + UDP-alpha-D-galactose = 1,2-di-(9Z-octadecenoyl)-3-beta-D-galactosyl-sn-glycerol + UDP + H(+). With respect to regulation, inhibited by galvestine-1. Functionally, involved in the synthesis of monogalactosyldiacylglycerol, the major structural component of photosynthetic membranes and in the chloroplast envelope biogenesis. Can use both prokaryotic (18:1/16:0) or eukaryotic (18:2/18:2) 1,2-diacylglycerol species, but operates with some preference for the eukaryotic one. Plays a minor role in galactolipid synthesis in chloroplasts. Is required for membrane lipid remodeling in phosphate-starved roots. Acts as the minor factor involved in digalactosyldiacylglycerol (DGDG) biosynthesis in phosphate-starved roots. Does not seem to be required for plant growth under nutrient-sufficient conditions. Required for membrane lipid remodeling in plants grown in acidic conditions. The chain is Monogalactosyldiacylglycerol synthase 2, chloroplastic from Arabidopsis thaliana (Mouse-ear cress).